We begin with the raw amino-acid sequence, 327 residues long: Ribonucleoside-diphosphate reductase small chain (327 aa).

Residues aspartate 70, glutamate 101, and histidine 104 each coordinate Fe cation. Residue tyrosine 108 is part of the active site. 3 residues coordinate Fe cation: glutamate 164, glutamate 198, and histidine 201.

It belongs to the ribonucleoside diphosphate reductase small chain family. Heterotetramer composed of a homodimer of the large subunit (R1) and a homodimer of the small subunit (R2). Larger multisubunit protein complex are also active, composed of (R1)n(R2)n. The cofactor is Fe cation.

It catalyses the reaction a 2'-deoxyribonucleoside 5'-diphosphate + [thioredoxin]-disulfide + H2O = a ribonucleoside 5'-diphosphate + [thioredoxin]-dithiol. Ribonucleoside-diphosphate reductase holoenzyme provides the precursors necessary for viral DNA synthesis. Allows virus growth in non-dividing cells. Catalyzes the biosynthesis of deoxyribonucleotides from the corresponding ribonucleotides. This chain is Ribonucleoside-diphosphate reductase small chain, found in Ornithodoros (relapsing fever ticks).